A 67-amino-acid polypeptide reads, in one-letter code: Small ribosomal subunit protein eS17 (67 aa).

The protein belongs to the eukaryotic ribosomal protein eS17 family.

The protein is Small ribosomal subunit protein eS17 of Korarchaeum cryptofilum (strain OPF8).